A 228-amino-acid polypeptide reads, in one-letter code: MNSMAPVITIDGPSGSGKGTVAGLIARELGWKLLDSGALYRLLAFNASNHGVDLTNEELLTKLAAHLDVQFIAAEPGKLQQIILEGEDVSNVIRTETVGAGASMVASLPAVRDALLVRQREFREVPGLIADGRDMGTVVFPDAPLKVFLTASAEERARRRYLQLKGKGEDVSLSSLLDEIRARDERDTQRAVAPLKPAADAIQLDSTELSIEQVLQRIRSEIAQRDLI.

12-20 is a binding site for ATP; it reads GPSGSGKGT.

It belongs to the cytidylate kinase family. Type 1 subfamily.

It localises to the cytoplasm. It carries out the reaction CMP + ATP = CDP + ADP. It catalyses the reaction dCMP + ATP = dCDP + ADP. In Pseudomonas putida (strain ATCC 47054 / DSM 6125 / CFBP 8728 / NCIMB 11950 / KT2440), this protein is Cytidylate kinase.